A 156-amino-acid chain; its full sequence is Large ribosomal subunit protein uL15 (156 aa).

The segment at 1-48 is disordered; sequence MKLHDLKPTPGSRKDRKRVGRGPGGTDKTAGRGHKGQKSRSGAGKGAF.

It belongs to the universal ribosomal protein uL15 family. As to quaternary structure, part of the 50S ribosomal subunit. Contacts proteins L4, L21 and L35.

Functionally, binds to the 23S rRNA. This Deinococcus radiodurans (strain ATCC 13939 / DSM 20539 / JCM 16871 / CCUG 27074 / LMG 4051 / NBRC 15346 / NCIMB 9279 / VKM B-1422 / R1) protein is Large ribosomal subunit protein uL15 (rplO).